The sequence spans 186 residues: T-cell receptor-associated transmembrane adapter 1 (186 aa).

At 1-7 (MSGISGC) the chain is on the extracellular side. Residues 8 to 28 (PFFLWGLLALLGLALVISLIF) traverse the membrane as a helical; Signal-anchor for type III membrane protein segment. The Cytoplasmic segment spans residues 29-186 (NISHYVEKQR…LIRAKREPIN (158 aa)). Ser46 carries the post-translational modification Phosphoserine. The residue at position 79 (Tyr79) is a Phosphotyrosine. Residues 79–82 (YEQM) form an interaction with PIK3R1 region. Positions 116–140 (SVKGKRRKPRKQNTHFSDKDGDEQL) are disordered. The span at 118–128 (KGKRRKPRKQN) shows a compositional bias: basic residues. Basic and acidic residues predominate over residues 131-140 (FSDKDGDEQL).

In terms of assembly, homodimer; disulfide-linked. Interacts with CD3Z. When phosphorylated, interacts with PIK3R1. In terms of processing, phosphorylated on tyrosines by LCK or FYN upon TCR activation. As to expression, strongly expressed in thymus, and to a lesser extent in spleen, lymph node and peripheral blood lymphocytes. Present in T-cells and NK cells, but not B-cells (at protein level).

Its subcellular location is the cell membrane. Stabilizes the TCR (T-cell antigen receptor)/CD3 complex at the surface of T-cells. This is T-cell receptor-associated transmembrane adapter 1 (TRAT1) from Homo sapiens (Human).